A 92-amino-acid polypeptide reads, in one-letter code: Integration host factor subunit beta (92 aa).

The protein belongs to the bacterial histone-like protein family. Heterodimer of an alpha and a beta chain.

Functionally, this protein is one of the two subunits of integration host factor, a specific DNA-binding protein that functions in genetic recombination as well as in transcriptional and translational control. In Vibrio cholerae serotype O1 (strain ATCC 39541 / Classical Ogawa 395 / O395), this protein is Integration host factor subunit beta.